A 362-amino-acid chain; its full sequence is MPIVELADPICPVCEFPSNVELHFGGLVCGACAAFFRRTVSLNIRYLCEKNNQCKGMRKNCRACRFDYCVKIAGMKRNLVKQRRNSTNTPMYILNRRKDSGNEEVVRGMLKRMYLQFSSFSGFVTTTQSKWAHHSRKSSMSPNKEAEKDVSKILKISHGSLLKYYIYQITHDKRNNMNTLNIKSVEEFLEITSVQNKLAAELCKTCPGVDLLDNEDILILRKYFQFSNVWIESTWNYLRENNSVPIDDSELDLKLLKFINQVKSTLLVSFSQLKFNTIEFAAFKSICIWKLVYHETSRAMKIIAQEHYESVMKALNDYYQTYTSMDSMQIATRIGEITLLIISVFQMYHDMAKLYIQLGLPF.

The segment at residues 8 to 82 (DPICPVCEFP…AGMKRNLVKQ (75 aa)) is a DNA-binding region (nuclear receptor). NR C4-type zinc fingers lie at residues 11–32 (CPVCEFPSNVELHFGGLVCGAC) and 48–69 (CEKNNQCKGMRKNCRACRFDYC). Residues 145 to 362 (EAEKDVSKIL…KLYIQLGLPF (218 aa)) enclose the NR LBD domain.

The protein belongs to the nuclear hormone receptor family.

It localises to the nucleus. Functionally, orphan nuclear receptor. This is Nuclear hormone receptor family member nhr-77 (nhr-77) from Caenorhabditis elegans.